Here is a 479-residue protein sequence, read N- to C-terminus: Ammonium transporter Rh type C (479 aa).

The Cytoplasmic segment spans residues 1-9; sequence MAWNTNLRW. A helical membrane pass occupies residues 10–30; sequence RLPLTCLLLQVVMVILFGVFV. At 31 to 60 the chain is on the extracellular side; it reads RYDFEADAHWWSERTHKNLSDVENEFYYRY. The N-linked (GlcNAc...) asparagine glycan is linked to Asn48. The helical transmembrane segment at 61 to 81 threads the bilayer; sequence PSFQDVHVMVFVGFGFLMTFL. Residues 82-85 are Cytoplasmic-facing; it reads QRYG. Residues 86 to 106 traverse the membrane as a helical segment; it reads FSAVGFNFLLAAFGIQWALLM. Residues 107–123 are Extracellular-facing; sequence QGWFHFLQGRYIVVGVE. A helical membrane pass occupies residues 124 to 144; that stretch reads NLINADFCVASVCVAFGAVLG. Over 145-148 the chain is Cytoplasmic; the sequence is KVSP. The helical transmembrane segment at 149 to 169 threads the bilayer; it reads IQLLIMTFFQVTLFAVNEFIL. At 170–177 the chain is on the extracellular side; it reads LNLLKVKD. The helical transmembrane segment at 178–200 threads the bilayer; sequence AGGSMTIHTFGAYFGLTVTRILY. Residues 201–218 are Cytoplasmic-facing; the sequence is RRNLEQSKERQNSVYQSD. Residues 219 to 239 form a helical membrane-spanning segment; the sequence is LFAMIGTLFLWMYWPSFNSAI. At 240–250 the chain is on the extracellular side; the sequence is SYHGDSQHRAA. A helical transmembrane segment spans residues 251-271; the sequence is INTYCSLAACVLTSVAISSAL. Over 272–281 the chain is Cytoplasmic; that stretch reads HKKGKLDMVH. The chain crosses the membrane as a helical span at residues 282–302; the sequence is IQNATLAGGVAVGTAAEMMLM. Residue Pro303 is a topological domain, extracellular. The helical transmembrane segment at 304-324 threads the bilayer; that stretch reads YGALIIGFVCGIISTLGFVYL. Residues 325-345 lie on the Cytoplasmic side of the membrane; the sequence is TPFLESRLHIQDTCGINNLHG. Residues 346 to 366 traverse the membrane as a helical segment; the sequence is IPGIIGGIVGAVTAASASLEV. Residues 367-394 lie on the Extracellular side of the membrane; sequence YGKEGLVHSFDFQGFKGDWTARTQGKFQ. The chain crosses the membrane as a helical span at residues 395–415; that stretch reads IYGLLVTLAMALMGGIIVGLI. Over 416–479 the chain is Cytoplasmic; sequence LRLPFWGQPS…PMASSVPLVP (64 aa).

It belongs to the ammonium transporter (TC 2.A.49) family. Rh subfamily. In terms of assembly, homotrimer. In terms of processing, N-glycosylated.

The protein localises to the cell membrane. It localises to the apical cell membrane. It catalyses the reaction NH4(+)(in) = NH4(+)(out). The catalysed reaction is methylamine(out) = methylamine(in). It carries out the reaction CO2(out) = CO2(in). In terms of biological role, ammonium transporter involved in the maintenance of acid-base homeostasis. Transports ammonium and its related derivative methylammonium across the plasma membrane of epithelial cells likely contributing to renal transepithelial ammonia transport and ammonia metabolism. Postulated to primarily mediate an electroneutral bidirectional transport of NH3 ammonia species according to a mechanism that implies interaction of an NH4(+) ion with acidic residues of the pore entry followed by dissociation of NH4(+) into NH3 and H(+). As a result NH3 transits through the central pore and is protonated on the extracellular side reforming NH4(+). May act as a CO2 channel providing for renal acid secretion. This is Ammonium transporter Rh type C (RHCG) from Pan troglodytes (Chimpanzee).